Consider the following 399-residue polypeptide: Serine/threonine transporter SstT (399 aa).

A run of 9 helical transmembrane segments spans residues 8 to 28 (LSLV…AFLF), 37 to 57 (IFGE…VFVL), 77 to 97 (ILFL…IADL), 134 to 154 (PVVA…IILG), 178 to 198 (VIHL…AVTF), 212 to 232 (LLLV…PIMV), 284 to 304 (VIIP…ITVL), 312 to 332 (LGIS…SISA), and 348 to 370 (VACS…GMVI).

This sequence belongs to the dicarboxylate/amino acid:cation symporter (DAACS) (TC 2.A.23) family.

It is found in the cell inner membrane. The catalysed reaction is L-serine(in) + Na(+)(in) = L-serine(out) + Na(+)(out). The enzyme catalyses L-threonine(in) + Na(+)(in) = L-threonine(out) + Na(+)(out). Functionally, involved in the import of serine and threonine into the cell, with the concomitant import of sodium (symport system). This chain is Serine/threonine transporter SstT, found in Acinetobacter baylyi (strain ATCC 33305 / BD413 / ADP1).